Here is a 66-residue protein sequence, read N- to C-terminus: Toxin Boma6c (66 aa).

Residues 2–64 form the LCN-type CS-alpha/beta domain; sequence RDAYIAQNYN…VPIRIPGKCH (63 aa). Cystine bridges form between Cys-12–Cys-63, Cys-16–Cys-36, Cys-22–Cys-46, and Cys-26–Cys-48.

The protein belongs to the long (4 C-C) scorpion toxin superfamily. Sodium channel inhibitor family. Alpha subfamily. As to expression, expressed by the venom gland.

The protein localises to the secreted. Its function is as follows. Alpha toxins bind voltage-independently at site-3 of sodium channels (Nav) and inhibit the inactivation of the activated channels, thereby blocking neuronal transmission. This is Toxin Boma6c from Buthus occitanus mardochei (Moroccan scorpion).